A 152-amino-acid polypeptide reads, in one-letter code: UPF0178 protein YaiI (152 aa).

Belongs to the UPF0178 family.

The protein is UPF0178 protein YaiI of Shigella flexneri.